Consider the following 570-residue polypeptide: Proline--tRNA ligase (570 aa).

It belongs to the class-II aminoacyl-tRNA synthetase family. ProS type 1 subfamily. As to quaternary structure, homodimer.

The protein resides in the cytoplasm. The catalysed reaction is tRNA(Pro) + L-proline + ATP = L-prolyl-tRNA(Pro) + AMP + diphosphate. Catalyzes the attachment of proline to tRNA(Pro) in a two-step reaction: proline is first activated by ATP to form Pro-AMP and then transferred to the acceptor end of tRNA(Pro). As ProRS can inadvertently accommodate and process non-cognate amino acids such as alanine and cysteine, to avoid such errors it has two additional distinct editing activities against alanine. One activity is designated as 'pretransfer' editing and involves the tRNA(Pro)-independent hydrolysis of activated Ala-AMP. The other activity is designated 'posttransfer' editing and involves deacylation of mischarged Ala-tRNA(Pro). The misacylated Cys-tRNA(Pro) is not edited by ProRS. The chain is Proline--tRNA ligase from Shewanella oneidensis (strain ATCC 700550 / JCM 31522 / CIP 106686 / LMG 19005 / NCIMB 14063 / MR-1).